The chain runs to 359 residues: Large ribosomal subunit protein uL3 (359 aa).

The segment at 336-359 (VRPPAKRPPAEAPQITYISRESKQ) is disordered.

Belongs to the universal ribosomal protein uL3 family. Part of the 50S ribosomal subunit. Forms a cluster with proteins L14 and L24e.

One of the primary rRNA binding proteins, it binds directly near the 3'-end of the 23S rRNA, where it nucleates assembly of the 50S subunit. In Thermococcus sibiricus (strain DSM 12597 / MM 739), this protein is Large ribosomal subunit protein uL3.